The following is a 690-amino-acid chain: Calpain-9 (690 aa).

Positions 1–23 are disordered; the sequence is MPYLHRSLRPQPQPVPGDARTIH. A Calpain catalytic domain is found at 42–337; sequence LFEDADFPAS…FDKVEICNLT (296 aa). The Ca(2+) site is built by leucine 81, glycine 83, and aspartate 88. Cysteine 97 is an active-site residue. A Ca(2+)-binding site is contributed by glutamate 167. Catalysis depends on residues histidine 254 and asparagine 278. Residues glutamate 284, aspartate 291, leucine 312, aspartate 314, and glutamate 316 each coordinate Ca(2+). Positions 338–521 are domain III; that stretch reads PDALEDSALH…PQEEETEEEQ (184 aa). EF-hand domains are found at residues 518-552, 561-589, and 591-626; these read EEEQQFRALFQRVAGEDMEVSAEELEYVLNAVLQK, LSLLSCRNIISLMDTSGNGKLEFEEFRVF, and DKLKHWMDLFLQFDVDKSGTMSSYELRTALKAAGFQ. The tract at residues 522–690 is domain IV; the sequence is QFRALFQRVA…NEFISLTMNI (169 aa). Ca(2+) is bound by residues aspartate 574, serine 576, asparagine 578, lysine 580, glutamate 585, aspartate 604, aspartate 606, serine 608, threonine 610, and glutamate 615.

It belongs to the peptidase C2 family. In terms of tissue distribution, predominantly expressed in stomach and small intestine, although low levels of expression in other organs.

The protein resides in the cytoplasm. Its function is as follows. Calcium-regulated non-lysosomal thiol-protease. This chain is Calpain-9 (Capn9), found in Mus musculus (Mouse).